The chain runs to 317 residues: UV DNA damage endonuclease (317 aa).

It belongs to the uve1/UvsE family.

Functionally, component in a DNA repair pathway. Removal of UV LIGHT damaged nucleotides. Recognizes pyrimidine dimers and cleave a phosphodiester bond immediately 5' to the lesion. The polypeptide is UV DNA damage endonuclease (Bacillus cereus (strain Q1)).